The sequence spans 261 residues: Pantothenate synthetase (261 aa).

29 to 36 (MGALHNGH) serves as a coordination point for ATP. The active-site Proton donor is His-36. Position 60 (Gln-60) interacts with (R)-pantoate. A beta-alanine-binding site is contributed by Gln-60. 147–150 (GEKD) provides a ligand contact to ATP. Residue Gln-153 participates in (R)-pantoate binding. Position 184-187 (184-187 (LSSR)) interacts with ATP.

Belongs to the pantothenate synthetase family. Homodimer.

Its subcellular location is the cytoplasm. It carries out the reaction (R)-pantoate + beta-alanine + ATP = (R)-pantothenate + AMP + diphosphate + H(+). The protein operates within cofactor biosynthesis; (R)-pantothenate biosynthesis; (R)-pantothenate from (R)-pantoate and beta-alanine: step 1/1. Catalyzes the condensation of pantoate with beta-alanine in an ATP-dependent reaction via a pantoyl-adenylate intermediate. The chain is Pantothenate synthetase from Francisella tularensis subsp. tularensis (strain FSC 198).